Consider the following 106-residue polypeptide: Insulin-like peptide 04 (106 aa).

An N-terminal signal peptide occupies residues 1–22; it reads MPRTFLVVLIYILAGFLCSTSA. Positions 23-37 are excised as a propeptide; that stretch reads LRKVNEASGIKTDGS. 3 disulfide bridges follow: cysteine 45–cysteine 50, cysteine 46–cysteine 80, and cysteine 59–cysteine 68. Residues 86–106 constitute a propeptide, c peptide; it reads RRKRSLTVDKREAKKFIRQRR.

It belongs to the insulin family.

The protein resides in the secreted. Insulin decreases blood glucose concentration. May have evolved to activate insulin receptors (INSR) in vertebrates. Molecular docking studies reveals unique interaction with the human insulin receptor. In vivo, insulin-like peptide injection reduces blood glucose levels in two models of zebrafish diabetes (streptozotocin- and glucose-induced). Also shorter swimming distance of zebrafish larvae, an effect which is not observed with human insulin. This is Insulin-like peptide 04 from Exaiptasia diaphana (Tropical sea anemone).